A 503-amino-acid chain; its full sequence is GMP synthase [glutamine-hydrolyzing] (503 aa).

Residues 1 to 189 (MVLVLDFGSQ…FLELAGAKRD (189 aa)) form the Glutamine amidotransferase type-1 domain. Residue cysteine 78 is the Nucleophile of the active site. Residues histidine 164 and glutamate 166 contribute to the active site. The GMPS ATP-PPase domain maps to 190–378 (WTPEHVLEEL…LGLPDTLRLR (189 aa)). 217–223 (SGGVDSS) lines the ATP pocket.

As to quaternary structure, homodimer.

The catalysed reaction is XMP + L-glutamine + ATP + H2O = GMP + L-glutamate + AMP + diphosphate + 2 H(+). Its pathway is purine metabolism; GMP biosynthesis; GMP from XMP (L-Gln route): step 1/1. Its function is as follows. Catalyzes the synthesis of GMP from XMP. The sequence is that of GMP synthase [glutamine-hydrolyzing] from Thermus thermophilus (strain ATCC BAA-163 / DSM 7039 / HB27).